The primary structure comprises 380 residues: Protein trichome birefringence-like 38 (380 aa).

A helical; Signal-anchor for type II membrane protein transmembrane segment spans residues 7 to 29 (SLLLLFLPLLTVTILSGVEQAFA). Residues 134–136 (GDS) carry the GDS motif motif. The DCXHWCLPGXXDXWN motif signature appears at 357–371 (DCSHWCLPGLPDTWN).

It belongs to the PC-esterase family. TBL subfamily.

It is found in the membrane. Functionally, may act as a bridging protein that binds pectin and other cell wall polysaccharides. Probably involved in maintaining esterification of pectins. May be involved in the specific O-acetylation of cell wall polymers. The chain is Protein trichome birefringence-like 38 (TBL38) from Arabidopsis thaliana (Mouse-ear cress).